A 317-amino-acid polypeptide reads, in one-letter code: Ribonuclease Z (317 aa).

Residues H63, H65, D67, H68, H143, D214, and H272 each coordinate Zn(2+). D67 functions as the Proton acceptor in the catalytic mechanism.

Belongs to the RNase Z family. In terms of assembly, homodimer. The cofactor is Zn(2+).

The catalysed reaction is Endonucleolytic cleavage of RNA, removing extra 3' nucleotides from tRNA precursor, generating 3' termini of tRNAs. A 3'-hydroxy group is left at the tRNA terminus and a 5'-phosphoryl group is left at the trailer molecule.. Functionally, zinc phosphodiesterase, which displays some tRNA 3'-processing endonuclease activity. Probably involved in tRNA maturation, by removing a 3'-trailer from precursor tRNA. The polypeptide is Ribonuclease Z (Ligilactobacillus salivarius (strain UCC118) (Lactobacillus salivarius)).